We begin with the raw amino-acid sequence, 89 residues long: Small ribosomal subunit protein uS15 (89 aa).

Belongs to the universal ribosomal protein uS15 family. As to quaternary structure, part of the 30S ribosomal subunit. Forms a bridge to the 50S subunit in the 70S ribosome, contacting the 23S rRNA.

One of the primary rRNA binding proteins, it binds directly to 16S rRNA where it helps nucleate assembly of the platform of the 30S subunit by binding and bridging several RNA helices of the 16S rRNA. Its function is as follows. Forms an intersubunit bridge (bridge B4) with the 23S rRNA of the 50S subunit in the ribosome. This chain is Small ribosomal subunit protein uS15, found in Magnetococcus marinus (strain ATCC BAA-1437 / JCM 17883 / MC-1).